The primary structure comprises 829 residues: Leucine--tRNA ligase (829 aa).

The 'HIGH' region signature appears at 34-44 (PYPSGNIHMGH). Residues 591–595 (KMSKS) carry the 'KMSKS' region motif. Residue Lys-594 participates in ATP binding.

Belongs to the class-I aminoacyl-tRNA synthetase family.

The protein resides in the cytoplasm. The catalysed reaction is tRNA(Leu) + L-leucine + ATP = L-leucyl-tRNA(Leu) + AMP + diphosphate. This is Leucine--tRNA ligase from Ehrlichia canis (strain Jake).